The following is a 767-amino-acid chain: Lysyl oxidase homolog 2 (767 aa).

An N-terminal signal peptide occupies residues M1–G19. 4 SRCR domains span residues V51 to S152, I181 to T295, V319 to N418, and V428 to V537. 9 cysteine pairs are disulfide-bonded: C77/C141, C90/C151, C121/C131, C211/C284, C224/C294, C258/C268, C344/C407, C357/C417, and C388/C398. N281 is a glycosylation site (N-linked (GlcNAc...) asparagine). The N-linked (GlcNAc...) asparagine glycan is linked to N448. 3 disulfide bridges follow: C457–C523, C470–C536, and C504–C514. Residues P541–S744 form a lysyl-oxidase like region. The Ca(2+) site is built by D542 and L543. 4 cysteine pairs are disulfide-bonded: C566-C618, C572-C688, C650-C666, and C656-C678. 3 residues coordinate Cu cation: H619, H621, and H623. N637 is a glycosylation site (N-linked (GlcNAc...) asparagine). The segment at residues K646–Y682 is a cross-link (lysine tyrosylquinone (Lys-Tyr)). A 2',4',5'-topaquinone modification is found at Y682. Residues E715, D717, N720, and N721 each coordinate Ca(2+). C725 and C739 are disulfide-bonded.

The protein belongs to the lysyl oxidase family. Cu cation is required as a cofactor. Requires lysine tyrosylquinone residue as cofactor. Post-translationally, the lysine tyrosylquinone cross-link (LTQ) is generated by condensation of the epsilon-amino group of a lysine with a topaquinone produced by oxidation of tyrosine.

It is found in the secreted. It localises to the extracellular space. The protein localises to the extracellular matrix. The protein resides in the basement membrane. Its subcellular location is the nucleus. It is found in the chromosome. It localises to the endoplasmic reticulum. It carries out the reaction L-lysyl-[protein] + O2 + H2O = (S)-2-amino-6-oxohexanoyl-[protein] + H2O2 + NH4(+). Functionally, mediates the post-translational oxidative deamination of lysine residues on target proteins leading to the formation of deaminated lysine (allysine). Acts as a transcription corepressor and specifically mediates deamination of trimethylated 'Lys-4' of histone H3 (H3K4me3), a specific tag for epigenetic transcriptional activation. Shows no activity against histone H3 when it is trimethylated on 'Lys-9' (H3K9me3) or 'Lys-27' (H3K27me3) or when 'Lys-4' is monomethylated (H3K4me1) or dimethylated (H3K4me2). Also mediates deamination of methylated TAF10, a member of the transcription factor IID (TFIID) complex, which induces release of TAF10 from promoters, leading to inhibition of TFIID-dependent transcription. LOXL2-mediated deamination of TAF10 results in transcriptional repression of genes required for embryonic stem cell pluripotency. Involved in epithelial to mesenchymal transition (EMT) and participates in repression of E-cadherin, probably by mediating deamination of histone H3. When secreted into the extracellular matrix, promotes cross-linking of extracellular matrix proteins by mediating oxidative deamination of peptidyl lysine residues in precursors to fibrous collagen and elastin. Acts as a regulator of sprouting angiogenesis, probably via collagen IV scaffolding. Acts as a regulator of chondrocyte differentiation, probably by regulating expression of factors that control chondrocyte differentiation. In Xenopus tropicalis (Western clawed frog), this protein is Lysyl oxidase homolog 2 (loxl2).